A 712-amino-acid chain; its full sequence is T-box transcription factor TBX2 (712 aa).

The segment at residues 109–287 (LEAKELWDQF…NNPFAKGFRD (179 aa)) is a DNA-binding region (T-box). Residues 313–450 (PERDGAESDA…EGKEQGLAPL (138 aa)) are disordered. Residues 326–336 (DPPPAREPPTS) show a composition bias toward pro residues. Serine 336, serine 342, and serine 360 each carry phosphoserine. Composition is skewed to basic and acidic residues over residues 363-372 (EPERLSEERA), 391-409 (TEPE…KEPA), and 421-444 (SLEK…EGKE). The segment at 518-601 (GGNGGGGGPG…ATSAAAAAAA (84 aa)) is repression domain 1 (RD1). A phosphoserine mark is found at serine 622, serine 653, serine 657, and serine 676. The disordered stretch occupies residues 637 to 687 (LTTGLASEGSKAAGGNSREPSPLPELALRKVGAPSRGALSPSGSAKEAANE).

Binds DNA as a monomer. Interacts with PML (isoform PML-2, isoform PML-3 and isoform PML-4). In terms of tissue distribution, expressed primarily in adult in kidney, lung, and placenta. Weak expression in heart and ovary.

Its subcellular location is the nucleus. Its function is as follows. Transcription factor which acts as a transcriptional repressor. May also function as a transcriptional activator. Binds to the palindromic T site 5'-TTCACACCTAGGTGTGAA-3' DNA sequence, or a half-site, which are present in the regulatory region of several genes. Required for cardiac atrioventricular canal formation. May cooperate with NKX2.5 to negatively modulate expression of NPPA/ANF in the atrioventricular canal. May play a role as a positive regulator of TGFB2 expression, perhaps acting in concert with GATA4 in the developing outflow tract myocardium. Plays a role in limb pattern formation. Acts as a transcriptional repressor of ADAM10 gene expression, perhaps in concert with histone deacetylase HDAC1 as cofactor. Involved in branching morphogenesis in both developing lungs and adult mammary glands, via negative modulation of target genes; acting redundantly with TBX3. Required, together with TBX3, to maintain cell proliferation in the embryonic lung mesenchyme; perhaps acting downstream of SHH, BMP and TGFbeta signaling. Involved in modulating early inner ear development, acting independently of, and also redundantly with TBX3, in different subregions of the developing ear. Acts as a negative regulator of PML function in cellular senescence. Acts as a negative regulator of expression of CDKN1A/p21, IL33 and CCN4; repression of CDKN1A is enhanced in response to UV-induced stress, perhaps as a result of phosphorylation by p38 MAPK. Negatively modulates expression of CDKN2A/p14ARF and CDH1/E-cadherin. Plays a role in induction of the epithelial-mesenchymal transition (EMT). Plays a role in melanocyte proliferation, perhaps via regulation of cyclin CCND1. Involved in melanogenesis, acting via negative modulation of expression of DHICA oxidase/TYRP1 and P protein/OCA2. Involved in regulating retinal pigment epithelium (RPE) cell proliferation, perhaps via negatively modulating transcription of the transcription factor CEBPD. This Homo sapiens (Human) protein is T-box transcription factor TBX2 (TBX2).